The chain runs to 116 residues: Large ribosomal subunit protein bL19 (116 aa).

Belongs to the bacterial ribosomal protein bL19 family.

In terms of biological role, this protein is located at the 30S-50S ribosomal subunit interface and may play a role in the structure and function of the aminoacyl-tRNA binding site. The polypeptide is Large ribosomal subunit protein bL19 (Haemophilus ducreyi (strain 35000HP / ATCC 700724)).